Reading from the N-terminus, the 303-residue chain is Elongation factor Ts (303 aa).

Residues 80 to 83 are involved in Mg(2+) ion dislocation from EF-Tu; that stretch reads TDFV.

Belongs to the EF-Ts family.

It localises to the cytoplasm. Associates with the EF-Tu.GDP complex and induces the exchange of GDP to GTP. It remains bound to the aminoacyl-tRNA.EF-Tu.GTP complex up to the GTP hydrolysis stage on the ribosome. This chain is Elongation factor Ts, found in Clostridium botulinum (strain Alaska E43 / Type E3).